Here is a 366-residue protein sequence, read N- to C-terminus: sn-glycerol-3-phosphate import ATP-binding protein UgpC (366 aa).

The ABC transporter domain occupies 4-235 (LSLRNVQKTY…PASTFVAGFI (232 aa)). ATP is bound at residue 37-44 (GPSGCGKS).

It belongs to the ABC transporter superfamily. sn-glycerol-3-phosphate importer (TC 3.A.1.1.3) family. In terms of assembly, the complex is composed of two ATP-binding proteins (UgpC), two transmembrane proteins (UgpA and UgpE) and a solute-binding protein (UgpB).

The protein localises to the cell inner membrane. It catalyses the reaction sn-glycerol 3-phosphate(out) + ATP + H2O = sn-glycerol 3-phosphate(in) + ADP + phosphate + H(+). Its function is as follows. Part of the ABC transporter complex UgpBAEC involved in sn-glycerol-3-phosphate (G3P) import. Responsible for energy coupling to the transport system. This Cupriavidus necator (strain ATCC 17699 / DSM 428 / KCTC 22496 / NCIMB 10442 / H16 / Stanier 337) (Ralstonia eutropha) protein is sn-glycerol-3-phosphate import ATP-binding protein UgpC.